A 37-amino-acid chain; its full sequence is Omega/M-ectatotoxin-Et1a subunit A (37 aa).

Cysteine 12 and cysteine 34 are disulfide-bonded.

The protein belongs to the ectatomin family. Ectatomin-Et subfamily. Heterodimer of an A and a B chain; disulfide-linked. Expressed by the venom gland.

Its subcellular location is the secreted. It localises to the target cell membrane. Its function is as follows. Algogenic for animals, human and insects. At high concentrations (0.5-1 uM), it acts as a pore-forming protein that forms nonselective cation channels both in cell and artificial membranes. It is weakly selective for cation over anions channel conductance is identical in both directions. At lower concentrations (1-10 nM), this heterodimer inhibits cardiac L-type calcium currents in isolated rat cardiac ventricular myocytes. This is Omega/M-ectatotoxin-Et1a subunit A from Ectatomma tuberculatum (Selva ant).